A 990-amino-acid polypeptide reads, in one-letter code: Transposase for transposon Tn3926 (990 aa).

The segment at 673–698 is disordered; it reads GDGTTSSSDGQNFRTGSKAESTGHIN. A compositionally biased stretch (polar residues) spans 674–696; that stretch reads DGTTSSSDGQNFRTGSKAESTGH.

It belongs to the transposase 7 family.

In terms of biological role, required for transposition of transposon Tn3926. The polypeptide is Transposase for transposon Tn3926 (tnpA) (Escherichia coli).